The following is a 469-amino-acid chain: Zinc finger CCCH domain-containing protein 30 (469 aa).

The C3H1-type zinc-finger motif lies at V415–S443. A disordered region spans residues A444–N469. The segment covering D449–R458 has biased composition (basic residues).

This is Zinc finger CCCH domain-containing protein 30 from Oryza sativa subsp. japonica (Rice).